The chain runs to 43 residues: Defensin-B (43 aa).

3 disulfide bridges follow: cysteine 3–cysteine 34, cysteine 20–cysteine 39, and cysteine 24–cysteine 41.

The protein resides in the secreted. Its function is as follows. Antibacterial protein. Strong activity against the Gram-positive bacteria M.luteus, B.megaterium and S.aureus. Reduced activity against Gram-positive bacterium B.subtilis and weak activity against Gram-negative bacterium X.japonicus. No detectable activity against the Gram-negative bacteria E.asbriae, E.coli, P.aeruginosa and S.marcescens. The sequence is that of Defensin-B from Anomala cuprea (Cupreous chafer beetle).